The primary structure comprises 862 residues: Transcription initiation factor TFIID subunit 4B (862 aa).

The interval N100–A241 is sufficient for interaction with ZNF628. The span at V219–P237 shows a compositional bias: polar residues. The segment at V219–L239 is disordered. The TAFH domain maps to L256–V353. Positions P511–Q533 are required for interaction with P65/RELA. The Nuclear export signal signature appears at S516–K556. At S595 the chain carries Phosphoserine. The Histone-fold domain occupies P653–I702. Positions T722–N787 form a coiled coil. The segment at P830–K862 is required for interaction with TAF12.

This sequence belongs to the TAF4 family. In terms of assembly, TFIID is composed of TATA binding protein (TBP) and a number of TBP-associated factors (TAFs). Heterodimerizes with TAF12/TFII20 via the C-terminal H2A-like histone-fold domain. This heterodimer forms a histone-like octamer with the TAF6/TAFII70-TAF9/TAFII31 heterodimer. Interacts with P65/RELA homodimers and P65/RELA-REL heterodimers. Interaction with POU2AF1, via its C-terminal activation domain, is required for octamer-dependent transcription. Interacts with ZNF628. In terms of processing, under stimulation by forskolin, Isoform 1 is phosphorylated by protein kinase A (PKA). In terms of tissue distribution, preferentially expressed in ovarian granulosa cells (at protein level). Highly expressed in B-cells.

It localises to the nucleus. Its subcellular location is the cytoplasm. Cell type-specific subunit of the general transcription factor TFIID that may function as a gene-selective coactivator in certain cells. TFIID is a multimeric protein complex that plays a central role in mediating promoter responses to various activators and repressors. TAF4B is a transcriptional coactivator of the p65/RELA NF-kappa-B subunit. Involved in the activation of a subset of antiapoptotic genes including TNFAIP3. May be involved in regulating folliculogenesis. Through interaction with OCBA/POU2AF1, acts as a coactivator of B-cell-specific transcription. Plays a role in spermiogenesis and oogenesis. This Homo sapiens (Human) protein is Transcription initiation factor TFIID subunit 4B (TAF4B).